We begin with the raw amino-acid sequence, 554 residues long: Propanediol dehydratase large subunit (554 aa).

This sequence belongs to the diol/glycerol dehydratase large subunit family. As to quaternary structure, the propanediol dehydratase enzyme is a heterotrimeric complex composed of a large (PduC), a medium (PduD) and a small (PduE) subunit. The cofactor is adenosylcob(III)alamin.

The protein localises to the bacterial microcompartment. The enzyme catalyses propane-1,2-diol = propanal + H2O. It functions in the pathway polyol metabolism; 1,2-propanediol degradation. Its function is as follows. Part of the PduCDE complex that catalyzes the dehydration of 1,2-propanediol (1,2-PD) to propionaldehyde. This subunit is directly targeted to the bacterial microcompartment (BMC). Expression of a cosmid containing the full 21-gene pdu operon in E.coli allows E.coli to grow on 1,2-propanediol (1,2-PD) with the appearance of BMCs in its cytoplasm. Functionally, the 1,2-PD-specific bacterial microcompartment (BMC) concentrates low levels of 1,2-PD catabolic enzymes, concentrates volatile reaction intermediates thus enhancing pathway flux and keeps the level of toxic, mutagenic propionaldehyde low. The protein is Propanediol dehydratase large subunit of Citrobacter freundii.